The chain runs to 160 residues: Probable chemoreceptor glutamine deamidase CheD (160 aa).

The protein belongs to the CheD family.

The catalysed reaction is L-glutaminyl-[protein] + H2O = L-glutamyl-[protein] + NH4(+). Probably deamidates glutamine residues to glutamate on methyl-accepting chemotaxis receptors (MCPs), playing an important role in chemotaxis. The chain is Probable chemoreceptor glutamine deamidase CheD from Desulfitobacterium hafniense (strain DSM 10664 / DCB-2).